The sequence spans 484 residues: uncharacterized protein (484 aa).

Residues 47-226 (TLPIPAAVVK…TEVTVKIFKF (180 aa)) form the FAD-binding PCMH-type domain.

It belongs to the FAD-binding oxidoreductase/transferase type 4 family.

This is an uncharacterized protein from Escherichia coli (strain K12).